Consider the following 1469-residue polypeptide: snRNA-activating protein complex subunit 4 (1469 aa).

The segment at 16–82 is disordered; sequence ELERILDPGS…DPKDKTLPED (67 aa). Residues 24–36 show a composition bias toward low complexity; it reads GSSGSHVEISESS. Acidic residues predominate over residues 37–53; sequence LESDSEADSLPSEDLDP. Ser-68 is modified (phosphoserine). An SNAPC5-binding region spans residues 84-133; it reads ETCLQLNMVYQEVIQEKLAEANLLLAQNREQQEELMRDLAGSKGTKVKDG. The region spanning 250 to 288 is the Myb-like 1 domain; the sequence is EEALLGNRLDSHDWEKISNINFEGSRSAEEIRKFWQNSE. One can recognise an HTH myb-type 1 domain in the interval 289–343; the sequence is HPSINKQEWSREEEERLQAIAAAHGHLEWQKIAEELGTSRSAFQCLQKFQQHNKA. A DNA-binding region (H-T-H motif) is located at residues 317–341; sequence WQKIAEELGTSRSAFQCLQKFQQHN. Residues 344–395 enclose the Myb-like 2 domain; the sequence is LKRKEWTEEEDRMLTQLVQEMRVGSHIPYRRIVYYMEGRDSMQLIYRWTKSL. HTH myb-type domains are found at residues 396–451 and 452–503; these read DPGL…HFSL and KKGR…GKKQ. 2 consecutive DNA-binding regions (H-T-H motif) follow at residues 424-447 and 476-499; these read WFKI…LRRL and WAKI…KIMM. Disordered stretches follow at residues 501-558, 577-661, 685-710, 834-894, 932-981, 1001-1051, 1121-1167, and 1184-1266; these read KKQG…GDRA, QSTS…QALE, RSCT…SGDS, ASSS…KTVS, PLPH…DKRL, PAAS…PSPT, AAQG…PAEA, and IPEP…GPEK. Residues 503 to 516 are compositionally biased toward basic residues; that stretch reads QGLRRRRRRARHSV. Residues 519-541 show a composition bias toward low complexity; sequence SSTSSSGSSSGSSGGSSSSSSSS. At Ser-599 the chain carries Phosphoserine. Over residues 602–618 the composition is skewed to polar residues; the sequence is KGSSASQGGSKEASTTA. Ser-626 carries the phosphoserine modification. The segment covering 932-944 has biased composition (pro residues); that stretch reads PLPHTPHGRPAPG. Over residues 951–968 the composition is skewed to low complexity; that stretch reads PLSGPGAPAAAKPGTSGS. The segment covering 1014 to 1029 has biased composition (polar residues); it reads ISVSCPESGLGQSQAP. Residues 1039 to 1051 show a composition bias toward pro residues; sequence EAPPFLPAAPSPT. Thr-1157 bears the Phosphothreonine mark. Over residues 1184–1195 the composition is skewed to basic and acidic residues; it reads IPEPRTSSHADP. Ser-1224 carries the post-translational modification Phosphoserine. Positions 1281–1393 are SNAPC2-binding; it reads ATQQWLGGQR…QGVRTTLSVP (113 aa). Phosphoserine occurs at positions 1398, 1400, and 1440. Residues 1430-1449 form a disordered region; sequence APDSGKCSASSCLDTSNDPD. The span at 1436 to 1445 shows a compositional bias: polar residues; that stretch reads CSASSCLDTS.

Part of the SNAPc complex composed of 5 subunits: SNAPC1, SNAPC2, SNAPC3, SNAPC4 and SNAPC5. SNAPC4 interacts with SNAPC1, SNAPC2, SNAPC5, BRF2 and TBP.

The protein localises to the nucleus. Its function is as follows. Part of the SNAPc complex required for the transcription of both RNA polymerase II and III small-nuclear RNA genes. Binds to the proximal sequence element (PSE), a non-TATA-box basal promoter element common to these 2 types of genes. Recruits TBP and BRF2 to the U6 snRNA TATA box. This chain is snRNA-activating protein complex subunit 4, found in Homo sapiens (Human).